Consider the following 104-residue polypeptide: Large ribosomal subunit protein uL24 (104 aa).

Belongs to the universal ribosomal protein uL24 family. In terms of assembly, part of the 50S ribosomal subunit.

In terms of biological role, one of two assembly initiator proteins, it binds directly to the 5'-end of the 23S rRNA, where it nucleates assembly of the 50S subunit. Its function is as follows. One of the proteins that surrounds the polypeptide exit tunnel on the outside of the subunit. This Shewanella oneidensis (strain ATCC 700550 / JCM 31522 / CIP 106686 / LMG 19005 / NCIMB 14063 / MR-1) protein is Large ribosomal subunit protein uL24.